The primary structure comprises 130 residues: Large ribosomal subunit protein bL17 (130 aa).

It belongs to the bacterial ribosomal protein bL17 family. In terms of assembly, part of the 50S ribosomal subunit. Contacts protein L32.

The polypeptide is Large ribosomal subunit protein bL17 (Azotobacter vinelandii (strain DJ / ATCC BAA-1303)).